A 257-amino-acid polypeptide reads, in one-letter code: Snake venom serine protease KN9 (257 aa).

The N-terminal stretch at 1–18 (MVLIRVLANLLILQLSYA) is a signal peptide. The propeptide occupies 19–24 (QKSSEL). A Peptidase S1 domain is found at 25–248 (VVGGDECNIN…HLDWIKSIIA (224 aa)). 5 disulfide bridges follow: C31–C162, C49–C65, C141–C209, C173–C188, and C199–C224. H64 acts as the Charge relay system in catalysis. A glycan (N-linked (GlcNAc...) asparagine) is linked at N102. Residue D109 is the Charge relay system of the active site. Residues N120 and N121 are each glycosylated (N-linked (GlcNAc...) asparagine). S203 serves as the catalytic Charge relay system.

Belongs to the peptidase S1 family. Snake venom subfamily. As to quaternary structure, monomer. As to expression, expressed by the venom gland.

The protein resides in the secreted. Snake venom serine protease that may act in the hemostasis system of the prey. The protein is Snake venom serine protease KN9 of Trimeresurus stejnegeri (Chinese green tree viper).